Reading from the N-terminus, the 354-residue chain is G protein alpha o subunit (354 aa).

A lipid anchor (N-myristoyl glycine) is attached at Gly2. Cys3 carries S-palmitoyl cysteine lipidation. One can recognise a G-alpha domain in the interval 32-354 (KDIKLLLLGA…ANNLRGCGLY (323 aa)). The segment at 35-48 (KLLLLGAGESGKST) is G1 motif. Residues 40 to 47 (GAGESGKS), 176 to 182 (LRTRVKT), 201 to 205 (DVGGQ), 270 to 273 (NKKD), and Ala326 contribute to the GTP site. Residues Ser47 and Thr182 each contribute to the Mg(2+) site. A G2 motif region spans residues 174–182 (DILRTRVKT). The G3 motif stretch occupies residues 197–206 (FKLFDVGGQR). Residues 266-273 (ILFLNKKD) are G4 motif. Residues 324–329 (TCATDT) form a G5 motif region.

This sequence belongs to the G-alpha family. G(i/o/t/z) subfamily. G proteins are composed of 3 units; alpha, beta and gamma. The alpha chain contains the guanine nucleotide binding site. As to expression, expressed primarily in neuronal cell bodies in the brain, optic lobe, and thoracic and abdominal ganglia. Also expressed in antenna, oocytes and ovarian nurse cells.

Its function is as follows. Guanine nucleotide-binding proteins (G proteins) are involved as modulators or transducers in various transmembrane signaling systems. Plays a role in glial cell differentiation during embryogenesis; loco, Galphai and the G-protein coupled receptor, moody, are required in the surface glia to achieve effective insulation of the nerve cord. The sequence is that of G protein alpha o subunit (Galphao) from Drosophila melanogaster (Fruit fly).